Reading from the N-terminus, the 328-residue chain is Malate dehydrogenase (328 aa).

12-18 (GAAGQIG) contacts NAD(+). Substrate contacts are provided by Arg-93 and Arg-99. Residues Asn-106, Gln-113, and 130–132 (VGN) each bind NAD(+). Substrate is bound by residues Asn-132 and Arg-166. His-191 acts as the Proton acceptor in catalysis.

This sequence belongs to the LDH/MDH superfamily. MDH type 2 family.

The enzyme catalyses (S)-malate + NAD(+) = oxaloacetate + NADH + H(+). Functionally, catalyzes the reversible oxidation of malate to oxaloacetate. The sequence is that of Malate dehydrogenase from Dechloromonas aromatica (strain RCB).